The following is a 182-amino-acid chain: Homeobox expressed in ES cells 1-A (182 aa).

The segment at residues 103–163 (YRGRRPRTAF…QNRRAKLKRS (61 aa)) is a DNA-binding region (homeobox).

It belongs to the ANF homeobox family. In terms of tissue distribution, initially expressed in the anterior dorsal region of early embryos and later exclusively in the primordium of the anterior pituitary gland.

The protein resides in the nucleus. Functionally, appears to be involved in the regional specification of the anterior head of Xenopus embryos. The chain is Homeobox expressed in ES cells 1-A (hesx1-a) from Xenopus laevis (African clawed frog).